Here is a 365-residue protein sequence, read N- to C-terminus: Ribosome biogenesis regulatory protein homolog (365 aa).

At methionine 1 the chain carries N-acetylmethionine. Serine 5 is modified (phosphoserine). Residues lysine 154 and lysine 226 each participate in a glycyl lysine isopeptide (Lys-Gly) (interchain with G-Cter in SUMO2) cross-link. Residues 200–255 (QMPSSAGLHPTGHQSKEELGRAMQVAKVSTASVGRFQERLPKEKAPRGSGKKRKFQ) form a disordered region. A compositionally biased stretch (basic and acidic residues) spans 235-245 (FQERLPKEKAP). Lysine 266 participates in a covalent cross-link: Glycyl lysine isopeptide (Lys-Gly) (interchain with G-Cter in SUMO2). Residues 272–365 (LRVMNSKKPQ…VPHHGGKRRK (94 aa)) are disordered. Citrulline is present on arginine 273. Basic residues-rich tracts occupy residues 302–325 (KRRK…RRKG) and 340–365 (GKKH…KRRK).

The protein belongs to the RRS1 family. Component of a hexameric 5S RNP precursor complex, composed of 5S RNA, RRS1, RPF2/BXDC1, RPL5, RPL11 and HEATR3; this complex acts as a precursor for ribosome assembly. Post-translationally, citrullinated by PADI4.

It is found in the nucleus. The protein localises to the nucleolus. Functionally, involved in ribosomal large subunit assembly. May regulate the localization of the 5S RNP/5S ribonucleoprotein particle to the nucleolus. In Rattus norvegicus (Rat), this protein is Ribosome biogenesis regulatory protein homolog (Rrs1).